Consider the following 97-residue polypeptide: Putative membrane protein insertion efficiency factor (97 aa).

Belongs to the UPF0161 family.

The protein resides in the cell membrane. In terms of biological role, could be involved in insertion of integral membrane proteins into the membrane. The protein is Putative membrane protein insertion efficiency factor of Lactobacillus helveticus (strain DPC 4571).